The primary structure comprises 152 residues: Xanthine-guanine phosphoribosyltransferase (152 aa).

Residues 37–38 (RG), arginine 69, and 88–96 (DDLVDTGGT) each bind 5-phospho-alpha-D-ribose 1-diphosphate. Residue arginine 69 participates in GMP binding. Aspartate 89 contacts Mg(2+). The guanine site is built by aspartate 92 and isoleucine 135. Xanthine contacts are provided by aspartate 92 and isoleucine 135. GMP contacts are provided by residues 92–96 (DTGGT) and 134–135 (WI).

This sequence belongs to the purine/pyrimidine phosphoribosyltransferase family. XGPT subfamily. As to quaternary structure, homotetramer. Requires Mg(2+) as cofactor.

It localises to the cell inner membrane. The enzyme catalyses GMP + diphosphate = guanine + 5-phospho-alpha-D-ribose 1-diphosphate. The catalysed reaction is XMP + diphosphate = xanthine + 5-phospho-alpha-D-ribose 1-diphosphate. It catalyses the reaction IMP + diphosphate = hypoxanthine + 5-phospho-alpha-D-ribose 1-diphosphate. Its pathway is purine metabolism; GMP biosynthesis via salvage pathway; GMP from guanine: step 1/1. It participates in purine metabolism; XMP biosynthesis via salvage pathway; XMP from xanthine: step 1/1. Purine salvage pathway enzyme that catalyzes the transfer of the ribosyl-5-phosphate group from 5-phospho-alpha-D-ribose 1-diphosphate (PRPP) to the N9 position of the 6-oxopurines guanine and xanthine to form the corresponding ribonucleotides GMP (guanosine 5'-monophosphate) and XMP (xanthosine 5'-monophosphate), with the release of PPi. To a lesser extent, also acts on hypoxanthine. The polypeptide is Xanthine-guanine phosphoribosyltransferase (Escherichia coli (strain UTI89 / UPEC)).